We begin with the raw amino-acid sequence, 56 residues long: Photosystem II reaction center protein K (56 aa).

A propeptide spanning residues 1–19 (MFNIFLDDAFIHSNNPFFG) is cleaved from the precursor. Residues 35-55 (MPIIPVLSFLLAFVWQAAVSF) traverse the membrane as a helical segment.

It belongs to the PsbK family. PSII is composed of 1 copy each of membrane proteins PsbA, PsbB, PsbC, PsbD, PsbE, PsbF, PsbH, PsbI, PsbJ, PsbK, PsbL, PsbM, PsbT, PsbX, PsbY, PsbZ, Psb30/Ycf12, at least 3 peripheral proteins of the oxygen-evolving complex and a large number of cofactors. It forms dimeric complexes.

Its subcellular location is the plastid. The protein resides in the chloroplast thylakoid membrane. Functionally, one of the components of the core complex of photosystem II (PSII). PSII is a light-driven water:plastoquinone oxidoreductase that uses light energy to abstract electrons from H(2)O, generating O(2) and a proton gradient subsequently used for ATP formation. It consists of a core antenna complex that captures photons, and an electron transfer chain that converts photonic excitation into a charge separation. This Pinus thunbergii (Japanese black pine) protein is Photosystem II reaction center protein K.